Here is a 205-residue protein sequence, read N- to C-terminus: CASP-like protein 3A1 (205 aa).

Over 1–39 (MGIGMDSSTMSGPLVAHSGILDGDYEKRPAVCKMQMRFD) the chain is Cytoplasmic. Residues 40–60 (LANVGLRVLSLACSLVALVSM) form a helical membrane-spanning segment. The Extracellular segment spans residues 61–89 (ASNQESGVVTVFGFKLPVYSKWSYSDSFE). Residues 90 to 110 (FLVGASAAAAAHSLLQLLLCG) form a helical membrane-spanning segment. Over 111 to 125 (MKMVKRASTIPSRNH) the chain is Cytoplasmic. Residues 126-146 (AWLLFAGDQVFAYGMLAAASA) traverse the membrane as a helical segment. At 147 to 176 (AAGVTNLNRTGFRHSDLPNFCKPLHRFCDK) the chain is on the extracellular side. N-linked (GlcNAc...) asparagine glycosylation occurs at Asn154. The helical transmembrane segment at 177–197 (AAISIVFAFISSLILGGSAVL) threads the bilayer. Residues 198–205 (DVFWLSKN) are Cytoplasmic-facing.

The protein belongs to the Casparian strip membrane proteins (CASP) family. As to quaternary structure, homodimer and heterodimers.

The protein resides in the cell membrane. The polypeptide is CASP-like protein 3A1 (Picea sitchensis (Sitka spruce)).